The primary structure comprises 136 residues: Outer envelope pore protein 16-4, chloroplastic (136 aa).

The contains 4 beta strands stretch occupies residues 1-59; sequence MEEELLSAVPCSSLTVESVLRVATAGGLYGLCAGPRDARKIGLSGVSQASFVAKSIGRF. 4 helical membrane-spanning segments follow: residues 18–34, 56–72, 86–102, and 110–126; these read SVLRVATAGGLYGLCAG, IGRFGFQCGLVSGVFTM, WVNALVGGAVAGAAVAI, and VVGMAGLVSAFSVLANC.

It belongs to the Tim17/Tim22/Tim23 family. Plastid outer envelope porin OEP16 (TC 1.B.30) subfamily. As to quaternary structure, homodimer and oligomers in membrane.

Its subcellular location is the plastid. The protein resides in the chloroplast outer membrane. In terms of biological role, voltage-dependent high-conductance channel with a slight cation-selectivity; selective for amino acids but excludes triosephosphates or uncharged sugars. Non-essential amino acid-selective channel protein and translocation pore for NADPH:protochlorophyllide oxidoreductase A (PORA) and possibly PORB. In Arabidopsis thaliana (Mouse-ear cress), this protein is Outer envelope pore protein 16-4, chloroplastic (OEP164).